Here is a 213-residue protein sequence, read N- to C-terminus: Thymidylate kinase (213 aa).

Position 10–17 (10–17) interacts with ATP; sequence GLEGAGKT.

The protein belongs to the thymidylate kinase family.

The catalysed reaction is dTMP + ATP = dTDP + ADP. Phosphorylation of dTMP to form dTDP in both de novo and salvage pathways of dTTP synthesis. In Salmonella dublin (strain CT_02021853), this protein is Thymidylate kinase.